Consider the following 200-residue polypeptide: Intraflagellar transport protein 43 homolog (200 aa).

Disordered stretches follow at residues 56 to 76 (KTGK…IAAP) and 175 to 200 (ERID…SSKY). A compositionally biased stretch (basic and acidic residues) spans 175–192 (ERIDAKDQPSDSRSRNAR).

It belongs to the IFT43 family. In terms of assembly, component of the IFT complex A (IFT-A) composed of at least che-11, daf-10, dyf-2, ift-139, ift-43 and ifta-1. In terms of tissue distribution, expressed in ciliated sensory neurons.

Its subcellular location is the cell projection. The protein localises to the cilium. As a component of IFT complex A (IFT-A), a complex required for retrograde ciliary transport and entry into cilia of G protein-coupled receptors (GPCRs), it is involved in ciliogenesis. In particular, may act redundantly with the intraflagellar transport protein ift-139 to regulate the transport of specific ciliary cargo proteins such as che-3 which are related to motility. This Caenorhabditis elegans protein is Intraflagellar transport protein 43 homolog.